Reading from the N-terminus, the 425-residue chain is Histone-binding protein RBBP4 (425 aa).

Residue Ala2 is modified to N-acetylalanine. WD repeat units lie at residues 32–125, 126–175, 176–223, 225–270, 271–314, 315–371, and 372–404; these read YDLV…NHEG, EVNR…RLRG, HQKE…KTIF, GHTA…HSVD, AHTA…HSFE, SHKD…FIHG, and GHTA…VWQM. The interaction with HAT1 stretch occupies residues 361 to 406; that stretch reads DGPPELLFIHGGHTAKISDFSWNPNEPWVICSVSEDNIMQVWQMAE.

Belongs to the WD repeat RBAP46/RBAP48/MSI1 family. As to quaternary structure, binds directly to histone H4, probably via helix 1 of the histone fold, a region that is not accessible when histone H4 is in chromatin. Interacts with CHAF1A, HDAC1, HDAC2, HDAC3 and HIRA. May also interact with HAT1.

It localises to the nucleus. The protein resides in the chromosome. The protein localises to the telomere. In terms of biological role, core histone-binding subunit that may target chromatin assembly factors, chromatin remodeling factors and histone deacetylases to their histone substrates in a manner that is regulated by nucleosomal DNA. Component of several complexes which regulate chromatin metabolism. The protein is Histone-binding protein RBBP4 (RBBP4) of Gallus gallus (Chicken).